The following is a 175-amino-acid chain: Austinoid biosynthesis cluster protein F (175 aa).

This sequence belongs to the trt14 isomerase family. Homodimer.

It functions in the pathway secondary metabolite biosynthesis; terpenoid biosynthesis. Its function is as follows. Part of the gene cluster that mediates the biosynthesis of calidodehydroaustin, a fungal meroterpenoid. The first step of the pathway is the synthesis of 3,5-dimethylorsellinic acid by the polyketide synthase ausA. 3,5-dimethylorsellinic acid is then prenylated by the polyprenyl transferase ausN. Further epoxidation by the FAD-dependent monooxygenase ausM and cyclization by the probable terpene cyclase ausL lead to the formation of protoaustinoid A. Protoaustinoid A is then oxidized to spiro-lactone preaustinoid A3 by the combined action of the FAD-binding monooxygenases ausB and ausC, and the dioxygenase ausE. Acid-catalyzed keto-rearrangement and ring contraction of the tetraketide portion of preaustinoid A3 by ausJ lead to the formation of preaustinoid A4. The aldo-keto reductase ausK, with the help of ausH, is involved in the next step by transforming preaustinoid A4 into isoaustinone which is in turn hydroxylated by the P450 monooxygenase ausI to form austinolide. The cytochrome P450 monooxygenase ausG modifies austinolide to austinol. Austinol is further acetylated to austin by the O-acetyltransferase ausP, which spontaneously changes to dehydroaustin. The cytochrome P450 monooxygenase ausR then converts dehydroaustin is into 7-dehydrodehydroaustin. The hydroxylation catalyzed by ausR permits the O-acetyltransferase ausQ to add an additional acetyl group to the molecule, leading to the formation of acetoxydehydroaustin. The short chain dehydrogenase ausT catalyzes the reduction of the double bond present between carbon atoms 1 and 2 to convert 7-dehydrodehydroaustin into 1,2-dihydro-7-hydroxydehydroaustin. AusQ catalyzes not only an acetylation reaction but also the addition of the PKS ausV diketide product to 1,2-dihydro-7-hydroxydehydroaustin, forming precalidodehydroaustin. Finally, the iron/alpha-ketoglutarate-dependent dioxygenase converts precalidodehydroaustin into calidodehydroaustin. This is Austinoid biosynthesis cluster protein F from Aspergillus calidoustus.